The chain runs to 425 residues: Serine--tRNA ligase (425 aa).

231-233 (TAE) serves as a coordination point for L-serine. 262–264 (RSE) provides a ligand contact to ATP. E285 lines the L-serine pocket. Position 349–352 (349–352 (EISS)) interacts with ATP. S385 contributes to the L-serine binding site.

This sequence belongs to the class-II aminoacyl-tRNA synthetase family. Type-1 seryl-tRNA synthetase subfamily. In terms of assembly, homodimer. The tRNA molecule binds across the dimer.

The protein resides in the cytoplasm. The enzyme catalyses tRNA(Ser) + L-serine + ATP = L-seryl-tRNA(Ser) + AMP + diphosphate + H(+). It carries out the reaction tRNA(Sec) + L-serine + ATP = L-seryl-tRNA(Sec) + AMP + diphosphate + H(+). Its pathway is aminoacyl-tRNA biosynthesis; selenocysteinyl-tRNA(Sec) biosynthesis; L-seryl-tRNA(Sec) from L-serine and tRNA(Sec): step 1/1. Catalyzes the attachment of serine to tRNA(Ser). Is also able to aminoacylate tRNA(Sec) with serine, to form the misacylated tRNA L-seryl-tRNA(Sec), which will be further converted into selenocysteinyl-tRNA(Sec). This chain is Serine--tRNA ligase, found in Bartonella bacilliformis (strain ATCC 35685 / KC583 / Herrer 020/F12,63).